Consider the following 123-residue polypeptide: Small ribosomal subunit protein uS13c (123 aa).

The disordered stretch occupies residues 90–123 (GKRHRNNLPVRGQRTRTNARSRRGSKKTVTGKKK). Residues 102 to 123 (QRTRTNARSRRGSKKTVTGKKK) show a composition bias toward basic residues.

It belongs to the universal ribosomal protein uS13 family. As to quaternary structure, part of the 30S ribosomal subunit.

It localises to the plastid. The protein localises to the chloroplast. Located at the top of the head of the 30S subunit, it contacts several helices of the 16S rRNA. In Trieres chinensis (Marine centric diatom), this protein is Small ribosomal subunit protein uS13c.